A 189-amino-acid polypeptide reads, in one-letter code: Translation initiation factor IF-3 (189 aa).

This sequence belongs to the IF-3 family. Monomer.

It is found in the cytoplasm. Functionally, IF-3 binds to the 30S ribosomal subunit and shifts the equilibrium between 70S ribosomes and their 50S and 30S subunits in favor of the free subunits, thus enhancing the availability of 30S subunits on which protein synthesis initiation begins. The sequence is that of Translation initiation factor IF-3 from Corynebacterium glutamicum (strain ATCC 13032 / DSM 20300 / JCM 1318 / BCRC 11384 / CCUG 27702 / LMG 3730 / NBRC 12168 / NCIMB 10025 / NRRL B-2784 / 534).